Here is a 155-residue protein sequence, read N- to C-terminus: Transcriptional regulator MraZ (155 aa).

SpoVT-AbrB domains are found at residues 5-52 and 81-124; these read TYEN…SQDR and SMNL…EPAA.

It belongs to the MraZ family. Forms oligomers.

Its subcellular location is the cytoplasm. It localises to the nucleoid. The polypeptide is Transcriptional regulator MraZ (Pelagibacter ubique (strain HTCC1062)).